The chain runs to 39 residues: Photosystem I reaction center subunit IX (39 aa).

Residues 7–27 (FLTTAPVAFILFSSFVFALFI) form a helical membrane-spanning segment.

This sequence belongs to the PsaJ family.

It localises to the cellular thylakoid membrane. May help in the organization of the PsaE and PsaF subunits. In Synechococcus sp. (strain JA-2-3B'a(2-13)) (Cyanobacteria bacterium Yellowstone B-Prime), this protein is Photosystem I reaction center subunit IX.